A 105-amino-acid chain; its full sequence is Large ribosomal subunit protein eL36 (105 aa).

An N6-acetyllysine modification is found at K62.

Belongs to the eukaryotic ribosomal protein eL36 family. As to quaternary structure, component of the large ribosomal subunit.

Its subcellular location is the cytoplasm. It localises to the cytosol. Component of the large ribosomal subunit. The ribosome is a large ribonucleoprotein complex responsible for the synthesis of proteins in the cell. The polypeptide is Large ribosomal subunit protein eL36 (Rpl36) (Rattus norvegicus (Rat)).